The chain runs to 291 residues: Phosphatidylglycerol--prolipoprotein diacylglyceryl transferase (291 aa).

The next 7 helical transmembrane spans lie at 21 to 41 (VALH…MWLA), 60 to 80 (LLYA…VLFY), 96 to 116 (WDGG…MIIF), 130 to 150 (FIAP…FING), 198 to 218 (SQLY…NLFI), 225 to 245 (GAVS…VEFF), and 260 to 280 (ISMG…MMVW). Arg143 is a binding site for a 1,2-diacyl-sn-glycero-3-phospho-(1'-sn-glycerol).

The protein belongs to the Lgt family.

It is found in the cell inner membrane. The enzyme catalyses L-cysteinyl-[prolipoprotein] + a 1,2-diacyl-sn-glycero-3-phospho-(1'-sn-glycerol) = an S-1,2-diacyl-sn-glyceryl-L-cysteinyl-[prolipoprotein] + sn-glycerol 1-phosphate + H(+). Its pathway is protein modification; lipoprotein biosynthesis (diacylglyceryl transfer). In terms of biological role, catalyzes the transfer of the diacylglyceryl group from phosphatidylglycerol to the sulfhydryl group of the N-terminal cysteine of a prolipoprotein, the first step in the formation of mature lipoproteins. The protein is Phosphatidylglycerol--prolipoprotein diacylglyceryl transferase of Salmonella choleraesuis (strain SC-B67).